The chain runs to 273 residues: 2,3,4,5-tetrahydropyridine-2,6-dicarboxylate N-succinyltransferase (273 aa).

The substrate site is built by Arg104 and Asp141.

The protein belongs to the transferase hexapeptide repeat family. In terms of assembly, homotrimer.

The protein localises to the cytoplasm. It catalyses the reaction (S)-2,3,4,5-tetrahydrodipicolinate + succinyl-CoA + H2O = (S)-2-succinylamino-6-oxoheptanedioate + CoA. It functions in the pathway amino-acid biosynthesis; L-lysine biosynthesis via DAP pathway; LL-2,6-diaminopimelate from (S)-tetrahydrodipicolinate (succinylase route): step 1/3. The protein is 2,3,4,5-tetrahydropyridine-2,6-dicarboxylate N-succinyltransferase of Neisseria meningitidis serogroup A / serotype 4A (strain DSM 15465 / Z2491).